Consider the following 316-residue polypeptide: tRNA dimethylallyltransferase (316 aa).

17–24 (GPTASGKT) contributes to the ATP binding site. A substrate-binding site is contributed by 19-24 (TASGKT). Interaction with substrate tRNA regions lie at residues 42–45 (DSAL), 166–170 (QRLSR), 247–252 (RCVGYR), and 280–287 (KRQITWLR).

Belongs to the IPP transferase family. In terms of assembly, monomer. Requires Mg(2+) as cofactor.

It catalyses the reaction adenosine(37) in tRNA + dimethylallyl diphosphate = N(6)-dimethylallyladenosine(37) in tRNA + diphosphate. Functionally, catalyzes the transfer of a dimethylallyl group onto the adenine at position 37 in tRNAs that read codons beginning with uridine, leading to the formation of N6-(dimethylallyl)adenosine (i(6)A). The polypeptide is tRNA dimethylallyltransferase (Escherichia coli O45:K1 (strain S88 / ExPEC)).